The following is a 718-amino-acid chain: Ophiobolin F synthase oblA (718 aa).

Residues 1 to 320 (MACKYSTLID…RYNGPTKFNE (320 aa)) form a (7Z)-ophiobola-7,19-dien-3-ol synthase region. Aspartate 93 and aspartate 97 together coordinate Mg(2+). Residue aspartate 93 coordinates substrate. A DDXXD 1 motif is present at residues 93–97 (DDVID). Substrate contacts are provided by residues 180-183 (RALD), asparagine 224, 228-232 (SFEKE), and 311-312 (RY). Residues 224 to 232 (NDLFSFEKE) carry the NSE/DTE motif. The tract at residues 321 to 718 (LQLLRSEHGL…LRVMLELLKV (398 aa)) is geranylfarnesyl diphosphate synthase. Positions 346–391 (LVEGDCHESKPNELKRKRNGVSVDDEMRTNGTNGAKKPAHVSQPST) are disordered. Residues 349-359 (GDCHESKPNEL) are compositionally biased toward basic and acidic residues. 3 residues coordinate isopentenyl diphosphate: lysine 429, arginine 432, and histidine 461. Residues aspartate 468 and aspartate 472 each contribute to the Mg(2+) site. Residues 468 to 472 (DDLED) carry the DDXXD 2 motif. Arginine 477 lines the dimethylallyl diphosphate pocket. Residue arginine 478 participates in isopentenyl diphosphate binding. The dimethylallyl diphosphate site is built by lysine 555, threonine 556, glutamine 594, asparagine 601, lysine 611, and lysine 621.

The protein in the N-terminal section; belongs to the terpene synthase family. In the C-terminal section; belongs to the FPP/GGPP synthase family. It depends on Mg(2+) as a cofactor.

It catalyses the reaction isopentenyl diphosphate + (2E,6E)-farnesyl diphosphate = (2E,6E,10E)-geranylgeranyl diphosphate + diphosphate. The enzyme catalyses isopentenyl diphosphate + (2E,6E,10E)-geranylgeranyl diphosphate = (2E,6E,10E,14E)-geranylfarnesyl diphosphate + diphosphate. The catalysed reaction is (2E,6E,10E,14E)-geranylfarnesyl diphosphate + H2O = ophiobolin F + diphosphate. The protein operates within secondary metabolite biosynthesis; terpenoid biosynthesis. In terms of biological role, bifunctional sesterterpene synthase; part of the gene cluster that mediates the biosynthesis of the sesterterpenes ophiobolins, fungal phytotoxins with potential anti-cancer activities. The first step of the pathway is performed by the sesterterpene synthase oblA that possesses both prenyl transferase and terpene cyclase activity, converting isopentenyl diphosphate and dimethylallyl diphosphate into geranylfarnesyl diphosphate (GFPP) and further converting GFPP into ophiobolin F, respectively. Other sesterterpenoids (C(25) terpenoids) are found as minor products of oblA. It is expected that ophiobolin F is then oxidized to ophiobolin A via ophiobolin C and ophiobolin B intermediates by the combined action of the cytochrome P450 monooxygenase oblB and the FAD-dependent oxidoreductase oblC. Although oblB catalyzes multistep oxygenations at C5 and C21/C7 in a relatively efficient manner, it is unable to convert ophiobolin F to ophiobolin C and produces instead several unexpected derivatives. This is Ophiobolin F synthase oblA from Aspergillus clavatus (strain ATCC 1007 / CBS 513.65 / DSM 816 / NCTC 3887 / NRRL 1 / QM 1276 / 107).